We begin with the raw amino-acid sequence, 352 residues long: Pyrimidine monooxygenase RutA (352 aa).

Residues 49 to 50, asparagine 115, glutamate 124, 140 to 141, and serine 189 each bind FMN; these read IK and RY.

It belongs to the NtaA/SnaA/DszA monooxygenase family. RutA subfamily.

The catalysed reaction is uracil + FMNH2 + NADH + O2 = (Z)-3-ureidoacrylate + FMN + NAD(+) + H2O + H(+). It carries out the reaction thymine + FMNH2 + NADH + O2 = (Z)-2-methylureidoacrylate + FMN + NAD(+) + H2O + H(+). In terms of biological role, catalyzes the pyrimidine ring opening between N-3 and C-4 by an unusual flavin hydroperoxide-catalyzed mechanism, adding oxygen atoms in the process to yield ureidoacrylate peracid, that immediately reacts with FMN forming ureidoacrylate and FMN-N(5)-oxide. The FMN-N(5)-oxide reacts spontaneously with NADH to produce FMN. Requires the flavin reductase RutF to regenerate FMN in vivo. The sequence is that of Pyrimidine monooxygenase RutA from Caulobacter segnis (strain ATCC 21756 / DSM 7131 / JCM 7823 / NBRC 15250 / LMG 17158 / TK0059) (Mycoplana segnis).